The chain runs to 165 residues: NADPH-dependent 7-cyano-7-deazaguanine reductase (165 aa).

The active-site Thioimide intermediate is C56. D63 serves as the catalytic Proton donor. Residues 78–80 (VES) and 97–98 (HE) each bind substrate.

The protein belongs to the GTP cyclohydrolase I family. QueF type 1 subfamily.

It localises to the cytoplasm. The catalysed reaction is 7-aminomethyl-7-carbaguanine + 2 NADP(+) = 7-cyano-7-deazaguanine + 2 NADPH + 3 H(+). It functions in the pathway tRNA modification; tRNA-queuosine biosynthesis. In terms of biological role, catalyzes the NADPH-dependent reduction of 7-cyano-7-deazaguanine (preQ0) to 7-aminomethyl-7-deazaguanine (preQ1). This chain is NADPH-dependent 7-cyano-7-deazaguanine reductase, found in Bacillus cytotoxicus (strain DSM 22905 / CIP 110041 / 391-98 / NVH 391-98).